A 913-amino-acid chain; its full sequence is Pentatricopeptide repeat-containing protein At1g10270 (913 aa).

The interval 34–138 (SLSPANEDPE…PNAPRLPDST (105 aa)) is disordered. The span at 64–73 (DPSQFQIPQN) shows a compositional bias: polar residues. A compositionally biased stretch (pro residues) spans 74-84 (HTPPIPYPPIP). The Nuclear localization signal motif lies at 99-108 (ERRRRKRRLR). Positions 108 to 130 (RIEPPLHALRRDPSAPPPKRDPN) are enriched in basic and acidic residues. The interval 134–167 (LPDSTSALVGQRLNLHNRVQSLIRASDLDAASKL) is leucine-zipper. PPR repeat units lie at residues 179–214 (TVFTCNAIIAAMYRAKRYSESISLFQYFFKQSNIVP), 215–250 (NVVSYNQIINAHCDEGNVDEALEVYRHILANAPFAP), 251–285 (SSVTYRHLTKGLVQAGRIGDAASLLREMLSKGQAA), 286–316 (DSTVYNNLIRGYLDLGDFDKAVEFFDELKSK), 321–355 (DGIVNATFMEYWFEKGNDKEAMESYRSLLDKKFRM), 356–390 (HPPTGNVLLEVFLKFGKKDEAWALFNEMLDNHAPP), 396–426 (NSDTVGIMVNECFKMGEFSEAINTFKKVGSK), 435–469 (DYLGYCNIVTRFCEQGMLTEAERFFAEGVSRSLPA), 470–504 (DAPSHRAMIDAYLKAERIDDAVKMLDRMVDVNLRV), 505–539 (VADFGARVFGELIKNGKLTESAEVLTKMGEREPKP), and 540–574 (DPSIYDVVVRGLCDGDALDQAKDIVGEMIRHNVGV). The disordered stretch occupies residues 607–913 (RNAGQSGNTP…QEKKVVELRN (307 aa)). Over residues 639 to 649 (WTSQGVVHSNS) the composition is skewed to polar residues. Low complexity-rich tracts occupy residues 650-666 (GWANGTAGQTAGGAYKA) and 673-690 (SWSNTSDNQQQQSWSNQT). The interval 674–858 (WSNTSDNQQQ…TAQQQWSNQT (185 aa)) is 14 X 11 AA approximate tandem repeats of W-x(2)-Q-x(4)-Q-x(2). Polar residues predominate over residues 691–700 (AGQQPPSWSR). Low complexity predominate over residues 706–727 (QQQQSWSQQSGWSSPSGHQQSW). Over residues 728–761 (TNQTAGQQQPWANQTPGQQQQWANQTPGQQQQLA) the composition is skewed to polar residues. Positions 762-791 (NQTPGQQQQWANQTPGQQQQWANQNNGHQQ) are enriched in low complexity. Polar residues predominate over residues 792–814 (PWANQNTGHQQSWANQTPSQQQP). Residues 815 to 845 (WANQTTGQQQGWGNQTTGQQQQWANQTAGQQ) are compositionally biased toward low complexity. 2 stretches are compositionally biased toward polar residues: residues 846–867 (SGWTAQQQWSNQTASHQQSQWL) and 875–894 (ANQTPWSNSVDSHLPQQQEP). Over residues 899–913 (ECQETQEKKVVELRN) the composition is skewed to basic and acidic residues.

It belongs to the PPR family. P subfamily. As to quaternary structure, interacts with RPB36B through its WQQ domain. In terms of tissue distribution, ubiquitous but preferentially expressed in gametophytes and young embryos.

Its subcellular location is the nucleus. May function as a transcriptional regulator essential for early embryogenesis. In Arabidopsis thaliana (Mouse-ear cress), this protein is Pentatricopeptide repeat-containing protein At1g10270 (GRP23).